A 126-amino-acid polypeptide reads, in one-letter code: Small ribosomal subunit protein uS11 (126 aa).

The protein belongs to the universal ribosomal protein uS11 family. Part of the 30S ribosomal subunit.

Located on the platform of the 30S subunit. The sequence is that of Small ribosomal subunit protein uS11 from Methanosarcina barkeri (strain Fusaro / DSM 804).